The following is a 154-amino-acid chain: tRNA-splicing endonuclease (154 aa).

Residues tyrosine 86, histidine 102, and lysine 133 contribute to the active site.

The protein belongs to the tRNA-intron endonuclease family. Archaeal short subfamily. As to quaternary structure, homotetramer; although the tetramer contains four active sites, only two participate in the cleavage. Therefore, it should be considered as a dimer of dimers.

It catalyses the reaction pretRNA = a 3'-half-tRNA molecule with a 5'-OH end + a 5'-half-tRNA molecule with a 2',3'-cyclic phosphate end + an intron with a 2',3'-cyclic phosphate and a 5'-hydroxyl terminus.. Endonuclease that removes tRNA introns. Cleaves pre-tRNA at the 5'- and 3'-splice sites to release the intron. The products are an intron and two tRNA half-molecules bearing 2',3' cyclic phosphate and 5'-OH termini. Recognizes a pseudosymmetric substrate in which 2 bulged loops of 3 bases are separated by a stem of 4 bp. This Nanoarchaeum equitans (strain Kin4-M) protein is tRNA-splicing endonuclease.